Consider the following 738-residue polypeptide: Melanotransferrin (738 aa).

The signal sequence occupies residues 1 to 19; it reads MRLLSVTFWLLLSLRTVVC. 2 consecutive Transferrin-like domains span residues 23-357 and 366-706; these read VQWC…GLLC and LRWC…GMLS. 2 disulfides stabilise this stretch: cysteine 26/cysteine 63 and cysteine 36/cysteine 54. Residues aspartate 78 and tyrosine 107 each coordinate Fe(3+). A glycan (N-linked (GlcNAc...) asparagine) is linked at asparagine 118. Cystine bridges form between cysteine 130-cysteine 216, cysteine 172-cysteine 189, cysteine 186-cysteine 199, and cysteine 257-cysteine 271. Threonine 132 provides a ligand contact to hydrogencarbonate. Residue asparagine 135 is glycosylated (N-linked (GlcNAc...) asparagine). Positions 136, 138, and 139 each coordinate hydrogencarbonate. A Fe(3+)-binding site is contributed by tyrosine 210. Residues histidine 279 and tyrosine 451 each coordinate Fe(3+). Serine 462 bears the Phosphoserine mark. Asparagine 515 carries N-linked (GlcNAc...) asparagine glycosylation. Tyrosine 556 and histidine 625 together coordinate Fe(3+). Cysteine 709 carries GPI-anchor amidated cysteine lipidation. The propeptide at 710 to 738 is removed in mature form; that stretch reads SGAGAAVQRVPLLALLLLTLAAGLLPRVL.

The protein belongs to the transferrin family.

Its subcellular location is the cell membrane. Involved in iron cellular uptake. Seems to be internalized and then recycled back to the cell membrane. Binds a single atom of iron per subunit. Could also bind zinc. The protein is Melanotransferrin (Meltf) of Mus musculus (Mouse).